We begin with the raw amino-acid sequence, 3034 residues long: Cadherin EGF LAG seven-pass G-type receptor 1 (3034 aa).

Positions 1–29 (MAPSSPRVLPALVLLAAAALPALELGAAA) are cleaved as a signal peptide. Residues 30–2484 (WELRVPGGAR…REHGEVLPLK (2455 aa)) are Extracellular-facing. A compositionally biased stretch (low complexity) spans 222–243 (GTPSESPSVSPSLLNLSQPRAG). Positions 222-267 (GTPSESPSVSPSLLNLSQPRAGVVRRSRRGTGSSTSPQFPLPSYQV) are disordered. Asn236 carries an N-linked (GlcNAc...) asparagine glycan. Cadherin domains follow at residues 261 to 368 (PLPS…SPVF), 369 to 474 (EQSE…YPQF), 475 to 580 (SEKR…APIF), 581 to 702 (VSSP…DPMF), 703 to 804 (TQPV…RPVF), 805 to 907 (QSSH…APRF), 908 to 1014 (LRDF…PPVF), 1015 to 1116 (EKDE…PPEL), and 1121 to 1239 (ILFN…SPLL). Asn561, Asn649, and Asn793 each carry an N-linked (GlcNAc...) asparagine glycan. N-linked (GlcNAc...) asparagine glycosylation is found at Asn1129, Asn1154, Asn1228, Asn1264, Asn1274, and Asn1302. An EGF-like 1; calcium-binding domain is found at 1318–1376 (DDNICLREPCENYMKCVSVLRFDSSAPFISSTTVLFRPIHPITGLRCRCPPGFTGDYCE). 9 disulfides stabilise this stretch: Cys1322/Cys1333, Cys1327/Cys1364, Cys1366/Cys1375, Cys1382/Cys1393, Cys1387/Cys1402, Cys1404/Cys1413, Cys1422/Cys1433, Cys1427/Cys1443, and Cys1445/Cys1455. The region spanning 1378 to 1414 (EIDLCYSNPCGANGRCRSREGGYTCECFEDFTGEHCQ) is the EGF-like 2; calcium-binding domain. The EGF-like 3; calcium-binding domain occupies 1418-1456 (RSGRCASGVCKNGGTCVNLLIGGFHCVCPPGEYEHPYCE). The Laminin G-like 1 domain maps to 1457–1661 (VSTRSFPPQS…IANNGTRAGC (205 aa)). N-linked (GlcNAc...) asparagine glycosylation is found at Asn1591, Asn1638, and Asn1655. 13 disulfides stabilise this stretch: Cys1635/Cys1661, Cys1668/Cys1679, Cys1673/Cys1688, Cys1690/Cys1699, Cys1855/Cys1885, Cys1891/Cys1902, Cys1896/Cys1911, Cys1913/Cys1922, Cys1926/Cys1937, Cys1931/Cys1949, Cys1951/Cys1960, Cys1968/Cys1981, and Cys1983/Cys1993. One can recognise an EGF-like 4; calcium-binding domain in the interval 1664 to 1700 (QRNFCDGTSCQNGGTCVNRWNTYLCECPLRFGGKNCE). Asn1681 is subject to (3R)-3-hydroxyasparagine. The Laminin G-like 2 domain maps to 1704–1885 (PHPQRFTGES…ALKVRVKDGC (182 aa)). The 36-residue stretch at 1887–1922 (VEDPCASSPCPPHSHCRDTWDSYSCICDRGYFGKKC) folds into the EGF-like 5; calcium-binding domain. Asp1904 is subject to (3R)-3-hydroxyaspartate. The EGF-like 6; calcium-binding domain maps to 1923–1961 (VDACLLNPCKHVAACVRSPNTPRGYSCECGPGHYGQYCE). The region spanning 1962 to 1994 (NKVDLPCPKGWWGNPVCGPCHCAVSQGFDPDCN) is the EGF-like 7; calcium-binding domain. The N-linked (GlcNAc...) asparagine glycan is linked to Asn1994. The region spanning 1996–2031 (TNGQCQCKENYYKPPAQDACLPCDCFPHGSHSRACD) is the EGF-like 8; calcium-binding domain. Intrachain disulfides connect Cys2000–Cys2015, Cys2002–Cys2018, Cys2020–Cys2030, Cys2039–Cys2048, and Cys2051–Cys2063. The 48-residue stretch at 2018-2065 (CDCFPHGSHSRACDMDTGQCACKPGVIGRQCNRCDNPFAEVTSLGCEV) folds into the Laminin EGF-like domain. 6 N-linked (GlcNAc...) asparagine glycosylation sites follow: Asn2118, Asn2137, Asn2144, Asn2155, Asn2160, and Asn2272. The interval 2295–2346 (SVSFPADTFKPPEKKEGPVVRLTNRRTTPLTAQPEPRAERETSSSRRRRHPD) is disordered. Residues 2312 to 2476 (PVVRLTNRRT…AVLMDISRRE (165 aa)) enclose the GAIN-B domain. 2 disulfide bridges follow: Cys2426–Cys2458 and Cys2446–Cys2460. A GPS region spans residues 2426 to 2476 (CVFWNHSLDTGGTGGWSAKGCELLSRNRTHVTCQCSHSASCAVLMDISRRE). 2 N-linked (GlcNAc...) asparagine glycosylation sites follow: Asn2430 and Asn2452. Residues 2485–2505 (IITYAALSLSLVALLVAFVLL) form a helical membrane-spanning segment. Over 2506–2516 (SLVRTLRSNLH) the chain is Cytoplasmic. The helical transmembrane segment at 2517 to 2537 (SIHKNLITALFFSQLIFMVGI) threads the bilayer. Asn2538 is a glycosylation site (N-linked (GlcNAc...) asparagine). Residues 2538 to 2542 (NQTEN) lie on the Extracellular side of the membrane. The chain crosses the membrane as a helical span at residues 2543–2563 (PFLCTVVAILLHYVSMGTFAW). Residues 2564–2587 (TLVENLHVYRMLTEVRNIDTGPMR) lie on the Cytoplasmic side of the membrane. The helical transmembrane segment at 2588–2608 (FYHVVGWGIPAIVTGLAVGLD) threads the bilayer. At 2609-2625 (PQGYGNPDFCWLSLQDT) the chain is on the extracellular side. The chain crosses the membrane as a helical span at residues 2626 to 2646 (LIWSFAGPVGTVIIINTVIFV). Topologically, residues 2647–2670 (LSAKVSCQRKHHYYERKGVVSMLR) are cytoplasmic. The chain crosses the membrane as a helical span at residues 2671–2691 (TAFLLLLLVTATWLLGLLAVN). The Extracellular portion of the chain corresponds to 2692 to 2694 (SDT). Residues 2695–2715 (LSFHYLFAAFSCLQGIFVLLF) traverse the membrane as a helical segment. Topologically, residues 2716-3034 (HCVAHREVRK…QANGSDSEKP (319 aa)) are cytoplasmic. A disordered region spans residues 2774 to 3034 (TASLDSTTRD…QANGSDSEKP (261 aa)). A phosphoserine mark is found at Ser2776, Ser2779, Ser2886, and Ser2888. Residues 2893-2909 (TEPHLKVETKVSVELHR) are compositionally biased toward basic and acidic residues. The span at 2976-2986 (SPTSSRTSSLG) shows a compositional bias: low complexity. Over residues 3003–3012 (PRREPGREHL) the composition is skewed to basic and acidic residues. Positions 3020–3034 (RTGSAQANGSDSEKP) are enriched in polar residues.

It belongs to the G-protein coupled receptor 2 family. LN-TM7 subfamily. In terms of processing, the iron and 2-oxoglutarate dependent 3-hydroxylation of aspartate and asparagine is (R) stereospecific within EGF domains. Expressed in the brain, where it is localized principally in the ependymal cell layer, choroid plexus and the area postrema. Also found in spinal cord and in the eye.

Its subcellular location is the cell membrane. Receptor that may have an important role in cell/cell signaling during nervous system formation. The chain is Cadherin EGF LAG seven-pass G-type receptor 1 (Celsr1) from Mus musculus (Mouse).